A 139-amino-acid polypeptide reads, in one-letter code: Envelope glycoprotein N (139 aa).

Topologically, residues 1–100 (MACGKTESGD…CHSHFYGLSV (100 aa)) are virion surface. Residues 101 to 121 (SSFASIWMMVNAIVFICAFGV) traverse the membrane as a helical segment. The Intravirion portion of the chain corresponds to 122–139 (FMRHWCYKAFTSDTAKGY).

This sequence belongs to the herpesviridae glycoprotein N family. Interacts (via N-terminus) with gM (via N-terminus). The gM-gN heterodimer forms the gCII complex.

It localises to the virion membrane. It is found in the host membrane. Its subcellular location is the host Golgi apparatus. The protein resides in the host trans-Golgi network. Its function is as follows. Envelope glycoprotein necessary for proper maturation of gM and modulation of its membrane fusion activity. Also plays a critical role in virion morphogenesis. The polypeptide is Envelope glycoprotein N (Mus musculus (Mouse)).